The sequence spans 600 residues: UvrABC system protein C (600 aa).

The region spanning 15–92 is the GIY-YIG domain; sequence EKPGCYLMKD…IKKYQPYYNV (78 aa). Residues 197-232 enclose the UVR domain; the sequence is GAVKQDLTQKMEQASEQLEFERAAEIRDQLKYIEET.

This sequence belongs to the UvrC family. As to quaternary structure, interacts with UvrB in an incision complex.

The protein resides in the cytoplasm. The UvrABC repair system catalyzes the recognition and processing of DNA lesions. UvrC both incises the 5' and 3' sides of the lesion. The N-terminal half is responsible for the 3' incision and the C-terminal half is responsible for the 5' incision. This is UvrABC system protein C from Lactobacillus helveticus (strain DPC 4571).